The chain runs to 308 residues: Acetyl-coenzyme A carboxylase carboxyl transferase subunit beta 1 (308 aa).

One can recognise a CoA carboxyltransferase N-terminal domain in the interval 25–294 (VWTKCTSCEQ…PMVVSVNESP (270 aa)). C29, C32, C48, and C51 together coordinate Zn(2+). The C4-type zinc finger occupies 29–51 (CTSCEQVLYHAELERNLEVCPKC). A disordered region spans residues 289-308 (SVNESPNEEPYSVPEADEKG).

The protein belongs to the AccD/PCCB family. In terms of assembly, acetyl-CoA carboxylase is a heterohexamer composed of biotin carboxyl carrier protein (AccB), biotin carboxylase (AccC) and two subunits each of ACCase subunit alpha (AccA) and ACCase subunit beta (AccD). It depends on Zn(2+) as a cofactor.

It localises to the cytoplasm. The catalysed reaction is N(6)-carboxybiotinyl-L-lysyl-[protein] + acetyl-CoA = N(6)-biotinyl-L-lysyl-[protein] + malonyl-CoA. It functions in the pathway lipid metabolism; malonyl-CoA biosynthesis; malonyl-CoA from acetyl-CoA: step 1/1. Functionally, component of the acetyl coenzyme A carboxylase (ACC) complex. Biotin carboxylase (BC) catalyzes the carboxylation of biotin on its carrier protein (BCCP) and then the CO(2) group is transferred by the transcarboxylase to acetyl-CoA to form malonyl-CoA. This Vibrio campbellii (strain ATCC BAA-1116) protein is Acetyl-coenzyme A carboxylase carboxyl transferase subunit beta 1.